The sequence spans 2373 residues: Highly reducing polyketide synthase (2373 aa).

Positions 19 to 446 constitute a Ketosynthase family 3 (KS3) domain; that stretch reads QEPIAVVGIA…GSNAHVIVEE (428 aa). Residues Cys192, His329, and His369 each act as for beta-ketoacyl synthase activity in the active site. Residues 560–874 form a malonyl-CoA:ACP transacylase (MAT) domain region; that stretch reads IFTGQGAQWP…QYTSAMARGA (315 aa). Catalysis depends on Ser652, which acts as the For malonyltransferase activity. The interval 942-1078 is N-terminal hotdog fold; the sequence is HDLLGSKVLG…GLIRIDEDVP (137 aa). The interval 942-1241 is dehydratase (DH) domain; that stretch reads HDLLGSKVLG…LSGLRYTRID (300 aa). The region spanning 942-1246 is the PKS/mFAS DH domain; the sequence is HDLLGSKVLG…YTRIDTGPSV (305 aa). His974 (proton acceptor; for dehydratase activity) is an active-site residue. The segment at 1090–1246 is C-terminal hotdog fold; that stretch reads SHQVDASLWH…YTRIDTGPSV (157 aa). Asp1154 (proton donor; for dehydratase activity) is an active-site residue. The tract at residues 1669–1985 is enoyl reductase (ER) domain; the sequence is GTTDSLIYSE…SANHIGKIVI (317 aa). The segment at 2010–2187 is ketoreductase (KR) domain; that stretch reads GYLLIGGLKG…NSVDLGAIQD (178 aa). Residues 2294–2370 form the Carrier domain; that stretch reads AIHDAVIDVT…QLAQKIVARL (77 aa). Ser2330 carries the O-(pantetheine 4'-phosphoryl)serine modification.

Pantetheine 4'-phosphate is required as a cofactor.

Its pathway is mycotoxin biosynthesis. Its function is as follows. Highly reducing polyketide synthase; part of the gene cluster that mediates the biosynthesis of brefeldin A (BFA), a protein transport inhibitor that shows antiviral, antifungal, and antitumor properties. The proposed biosynthesis of BFA involves formation of an acyclic polyketide chain that is differentially tailored throughout the backbone. The highly reducing polyketide synthase Bref-PKS is proposed to synthesize the precisely reduced octaketide precursor, which could then be directly offloaded by the thiohydrolase enzyme Bref-TH followed by a cytochrome P450 monooxygenase-mediated formation of the cyclopentane ring and macrocyclization to afford 7-deoxy BFA. Alternatively, the first ring annulation can also occur on the ACP-tethered intermediate before the thiohydrolase release and lactonization. The C7-hydroxylation by another cytochrome P450 monooxygenase is believed to be the final step in the process to obtain the final structure of BFA. In addition to the HRPKS Bref-PKS and the thiohydrolase Bref-TH, the brefeldin A biosynthesis cluster contains 4 cytochrome p450 monooxygenases (called orf3 to orf6), as well a the probable cluster-specific transcription regulator orf8. The chain is Highly reducing polyketide synthase from Eupenicillium brefeldianum (Penicillium brefeldianum).